A 240-amino-acid chain; its full sequence is MSKAGGNKGGSRTGGRGGAGSSNLHVRVKKKAGTTKESSRRWLERHLNDPYVHKSRQDGYRSRAAYKLIEINDRYNLLKKGQKIIDLGAAPGGWSQIAARIVGSTDENPQVVGIDYLHVDPLPGVILLEMDFLDDEAPQKLMDALGDKPDLVISDMAAPTTGHRRTDHLRTVHLCEVAADFAVSVLKPGGHFLTKTFQGGTENELLALLKQKFRSVHHVKPPASRAESVELYLLARDFKG.

A compositionally biased stretch (gly residues) spans methionine 1–glycine 20. Positions methionine 1 to arginine 40 are disordered. S-adenosyl-L-methionine-binding residues include glycine 92, tryptophan 94, aspartate 115, aspartate 131, and aspartate 155. Residue lysine 195 is the Proton acceptor of the active site.

This sequence belongs to the class I-like SAM-binding methyltransferase superfamily. RNA methyltransferase RlmE family.

It localises to the cytoplasm. The catalysed reaction is uridine(2552) in 23S rRNA + S-adenosyl-L-methionine = 2'-O-methyluridine(2552) in 23S rRNA + S-adenosyl-L-homocysteine + H(+). In terms of biological role, specifically methylates the uridine in position 2552 of 23S rRNA at the 2'-O position of the ribose in the fully assembled 50S ribosomal subunit. This is Ribosomal RNA large subunit methyltransferase E from Brucella ovis (strain ATCC 25840 / 63/290 / NCTC 10512).